The chain runs to 495 residues: Glycerol kinase (495 aa).

Thr-11 lines the ADP pocket. ATP-binding residues include Thr-11, Thr-12, and Ser-13. Thr-11 is a binding site for sn-glycerol 3-phosphate. Arg-15 contacts ADP. Residues Arg-81, Glu-82, Tyr-133, and Asp-242 each coordinate sn-glycerol 3-phosphate. Glycerol-binding residues include Arg-81, Glu-82, Tyr-133, Asp-242, and Gln-243. 2 residues coordinate ADP: Thr-264 and Gly-307. The ATP site is built by Thr-264, Gly-307, Gln-311, and Gly-410. Gly-410 lines the ADP pocket.

This sequence belongs to the FGGY kinase family.

It carries out the reaction glycerol + ATP = sn-glycerol 3-phosphate + ADP + H(+). Its pathway is polyol metabolism; glycerol degradation via glycerol kinase pathway; sn-glycerol 3-phosphate from glycerol: step 1/1. Its activity is regulated as follows. Inhibited by fructose 1,6-bisphosphate (FBP). Key enzyme in the regulation of glycerol uptake and metabolism. Catalyzes the phosphorylation of glycerol to yield sn-glycerol 3-phosphate. In Roseobacter denitrificans (strain ATCC 33942 / OCh 114) (Erythrobacter sp. (strain OCh 114)), this protein is Glycerol kinase.